A 679-amino-acid chain; its full sequence is Stress-70 protein, mitochondrial (679 aa).

A mitochondrion-targeting transit peptide spans 1–46 (MISASRAAVSRFVGTAASRGPTAARHQDGWNGLSHEAFRIVSRRDY). The segment at 1 to 432 (MISASRAAVS…IQGGVLAGDV (432 aa)) is interaction with NFS1. Thr63 and Asn64 together coordinate ADP. The nucleotide-binding domain (NBD) stretch occupies residues 63 to 431 (TNSCVAVMEG…AIQGGVLAGD (369 aa)). N6-acetyllysine is present on Lys76. The residue at position 87 (Thr87) is a Phosphothreonine. N6-acetyllysine; alternate is present on residues Lys135 and Lys138. N6-succinyllysine; alternate occurs at positions 135 and 138. Residue Lys143 is modified to N6-acetyllysine. Lys206 is modified (N6-acetyllysine; alternate). Position 206 is an N6-succinyllysine; alternate (Lys206). Position 206 is an N6-malonyllysine; alternate (Lys206). Lys234 and Lys288 each carry N6-acetyllysine. Lys300 is subject to N6-acetyllysine; alternate. The residue at position 300 (Lys300) is an N6-succinyllysine; alternate. 3 residues coordinate ADP: Glu313, Lys316, and Ser320. Lys368 bears the N6-succinyllysine mark. Residues Gly388 and Arg391 each contribute to the ADP site. Residue Lys394 is modified to N6-succinyllysine. Ser408 carries the phosphoserine modification. The interdomain linker stretch occupies residues 432–441 (VTDVLLLDVT). The tract at residues 432 to 679 (VTDVLLLDVT…QKDNQKEEKQ (248 aa)) is interaction with FXN and ISCU. The tract at residues 442-679 (PLSLGIETLG…QKDNQKEEKQ (238 aa)) is substrate-binding domain (SBD). At Arg513 the chain carries Omega-N-methylarginine. Residues Lys567 and Lys600 each carry the N6-acetyllysine; alternate modification. N6-succinyllysine; alternate occurs at positions 567 and 600. The residue at position 610 (Lys610) is an N6-succinyllysine. At Lys612 the chain carries N6-acetyllysine. Lys646 is modified (N6-acetyllysine; alternate). Lys646 is modified (N6-succinyllysine; alternate). Residues 656-679 (ASEREGSGSSGTGEQKDNQKEEKQ) are disordered. The span at 669-679 (EQKDNQKEEKQ) shows a compositional bias: basic and acidic residues.

Belongs to the heat shock protein 70 family. In terms of assembly, interacts strongly with the intermediate form of FXN and weakly with its mature form. Interacts with HSCB. Associates with the mitochondrial contact site and cristae organizing system (MICOS) complex, composed of at least MICOS10/MIC10, CHCHD3/MIC19, CHCHD6/MIC25, APOOL/MIC27, IMMT/MIC60, APOO/MIC23/MIC26 and QIL1/MIC13. This complex was also known under the names MINOS or MitOS complex. The MICOS complex associates with mitochondrial outer membrane proteins SAMM50, MTX1, MTX2 and DNAJC11, mitochondrial inner membrane protein TMEM11 and with HSPA9. Interacts with DNLZ, the interaction is required to prevent self-aggregation. Interacts with TESPA1. Interacts with PDPN. Interacts with NFU1, NFS1 and ISCU. Interacts with TP53; the interaction promotes TP53 degradation. Interacts (via SBD domain) with UBXN2A; the interaction with UBXN2A inhibits HSPA9/MOT-2 interaction with and degradation of TP53, thereby promotes TP53 translocation to the nucleus. Interacts with ITPR1 AND VDAC1; this interaction couples ITPR1 to VDAC1. Component of the TIM23 mitochondrial inner membrane pre-sequence translocase complex.

It is found in the mitochondrion. Its subcellular location is the nucleus. The protein resides in the nucleolus. It localises to the cytoplasm. The protein localises to the mitochondrion matrix. The catalysed reaction is ATP + H2O = ADP + phosphate + H(+). With respect to regulation, the chaperone activity is regulated by ATP-induced allosteric coupling of the nucleotide-binding (NBD) and substrate-binding (SBD) domains. ATP binding in the NBD leads to a conformational change in the NBD, which is transferred through the interdomain linker (IDL) to the substrate-binding domain (SBD). This elicits a reduced substrate affinity and a faster substrate exchange rate. Upon hydrolysis of ATP to ADP, the protein undergoes a conformational change that increases its affinity for substrate proteins. It cycles through repeated phases of ATP hydrolysis and nucleotide exchange, facilitating repeated cycles of substrate binding and release. Functions in collaboration with co-chaperones. Functions with the co-chaperone, DNLZ, to maintain solubility and regulate ATP hydrolysis. Nucleotide exchange factors, GRPEL1 and GRPEL2, accelerate nucleotide exchange. Functionally, mitochondrial chaperone that plays a key role in mitochondrial protein import, folding, and assembly. Plays an essential role in the protein quality control system, the correct folding of proteins, the re-folding of misfolded proteins, and the targeting of proteins for subsequent degradation. These processes are achieved through cycles of ATP binding, ATP hydrolysis, and ADP release, mediated by co-chaperones. In mitochondria, it associates with the TIM (translocase of the inner membrane) protein complex to assist in the import and folding of mitochondrial proteins. Plays an important role in mitochondrial iron-sulfur cluster (ISC) biogenesis, interacts with and stabilizes ISC cluster assembly proteins FXN, NFU1, NFS1 and ISCU. Regulates erythropoiesis via stabilization of ISC assembly. Regulates mitochondrial calcium-dependent apoptosis by coupling two calcium channels, ITPR1 and VDAC1, at the mitochondria-associated endoplasmic reticulum (ER) membrane to facilitate calcium transport from the ER lumen to the mitochondria intermembrane space, providing calcium for the downstream calcium channel MCU, which releases it into the mitochondrial matrix. Although primarily located in the mitochondria, it is also found in other cellular compartments. In the cytosol, it associates with proteins involved in signaling, apoptosis, or senescence. It may play a role in cell cycle regulation via its interaction with and promotion of degradation of TP53. May play a role in the control of cell proliferation and cellular aging. Protects against reactive oxygen species (ROS). Extracellular HSPA9 plays a cytoprotective role by preventing cell lysis following immune attack by the membrane attack complex by disrupting formation of the complex. This is Stress-70 protein, mitochondrial from Bos taurus (Bovine).